The chain runs to 357 residues: Homeobox protein HMX3 (357 aa).

2 disordered regions span residues 1–58 and 129–229; these read MPEP…LFAP and LPRP…RKKK. A compositionally biased stretch (pro residues) spans 16 to 27; sequence PQPPPPPPPAPK. Composition is skewed to basic and acidic residues over residues 130–140 and 149–173; these read PRPEASEKALL and TDRDSPEPLLKADPDHKELDSKSPD. Phosphoserine is present on residues Ser-153 and Ser-180. Over residues 191-209 the composition is skewed to low complexity; sequence AAPGAAGASVGAAAATPGA. Residues 210-223 are compositionally biased toward basic and acidic residues; it reads EDWKKGAESPEKKP. A DNA-binding region (homeobox) is located at residues 227–286; that stretch reads KKKTRTVFSRSQVFQLESTFDMKRYLSSSERAGLAASLHLTETQVKIWFQNRRNKWKRQL.

Belongs to the HMX homeobox family.

Its subcellular location is the nucleus. Its function is as follows. Transcription factor involved in specification of neuronal cell types and which is required for inner ear and hypothalamus development. Binds to the 5'-CAAGTG-3' core sequence. Controls semicircular canal formation in the inner ear. Also required for hypothalamic/pituitary axis of the CNS. This is Homeobox protein HMX3 (HMX3) from Homo sapiens (Human).